The chain runs to 743 residues: Protein STB5 (743 aa).

A DNA-binding region (zn(2)-C6 fungal-type) is located at residues 22 to 49; sequence CARCRKLKKKCGKQIPTCANCDKNGAHC. Disordered regions lie at residues 81–100 and 155–249; these read VGKS…PLSA and NSNP…YANN. Composition is skewed to polar residues over residues 85 to 99 and 155 to 198; these read PLST…SPLS and NSNP…SPLI. Over residues 213–238 the composition is skewed to low complexity; the sequence is NNNRNTSNGDNGSNVNHDNNNGSTNT. Polar residues predominate over residues 239 to 249; that stretch reads PQLSLTPYANN.

The protein resides in the nucleus. Its function is as follows. Binds to SIN3. This Saccharomyces cerevisiae (strain ATCC 204508 / S288c) (Baker's yeast) protein is Protein STB5 (STB5).